Reading from the N-terminus, the 450-residue chain is Divalent metal cation transporter MntH (450 aa).

Transmembrane regions (helical) follow at residues 34-54 (LSFL…GNWI), 59-81 (GGAQ…AMLL), 108-128 (IAII…IAEV), 141-161 (IPLI…LFIM), 170-190 (AIVG…VYIS), 212-232 (GILY…NLYL), 263-283 (IQLS…ASLF), 305-325 (PVLG…ALLA), 361-381 (SLAV…AAKI), 383-403 (QLLV…LIPL), and 422-442 (VNII…YLIV).

Belongs to the NRAMP family.

It localises to the cell membrane. Functionally, h(+)-stimulated, divalent metal cation uptake system. The chain is Divalent metal cation transporter MntH from Staphylococcus aureus (strain MRSA252).